The following is a 154-amino-acid chain: MMMGEVQSLPSAGLHPALQDALTLALAARPQEKAPGRYELQGDNIFMNVMTFNTQSPVEKKAELHEQYIDIQLLLNGEERILFGMAGTARQCEEFHHEDDYQLCSTIDNEQAIILKPGMFAVFMPGEPHKPGCVVGEPGEIKKVVVKVKADLMA.

It belongs to the NanQ anomerase family. Zn(2+) is required as a cofactor.

It is found in the cytoplasm. The catalysed reaction is N-acetyl-alpha-neuraminate = aceneuramate. It carries out the reaction N-acetyl-beta-neuraminate = aceneuramate. Its activity is regulated as follows. Inhibited by 1,10-phenanthroline. Its function is as follows. Opens both the alpha- and beta-forms of N-acetylneuraminate (sialic acid; Neu5Ac) to provide aceneuramate, the preferred substrate for NanA. Has preferential activity on the beta-anomer rather than the alpha-anomer. Accelerates a reaction that is spontaneous at slightly alkaline pH, facilitates the reaction at acidic pH. This Escherichia coli (strain K12) protein is N-acetylneuraminate anomerase NanQ.